Reading from the N-terminus, the 316-residue chain is Ribosomal RNA small subunit methyltransferase H (316 aa).

Residues 35–37 (GGH), D55, F79, D101, and Q108 contribute to the S-adenosyl-L-methionine site.

This sequence belongs to the methyltransferase superfamily. RsmH family.

The protein localises to the cytoplasm. The enzyme catalyses cytidine(1402) in 16S rRNA + S-adenosyl-L-methionine = N(4)-methylcytidine(1402) in 16S rRNA + S-adenosyl-L-homocysteine + H(+). In terms of biological role, specifically methylates the N4 position of cytidine in position 1402 (C1402) of 16S rRNA. This is Ribosomal RNA small subunit methyltransferase H from Aliivibrio fischeri (strain ATCC 700601 / ES114) (Vibrio fischeri).